The following is a 211-amino-acid chain: Adenylate kinase (211 aa).

Residue 10–15 (GAGKGT) coordinates ATP. Residues 30–59 (STGGILRAAIQKQTALGKKVQKVVEVGGLV) are NMP. AMP is bound by residues threonine 31, arginine 36, 57 to 59 (GLV), 85 to 88 (GFPR), and glutamine 92. The tract at residues 121–158 (GRRVCSACGSSYHVLFAQPKREGVCDRCRGVLVVREDD) is LID. An ATP-binding site is contributed by arginine 122. Zn(2+)-binding residues include cysteine 125 and cysteine 128. An ATP-binding site is contributed by 131 to 132 (SY). Residues cysteine 145 and cysteine 148 each coordinate Zn(2+). Residues arginine 155 and arginine 166 each contribute to the AMP site. Position 194 (proline 194) interacts with ATP.

The protein belongs to the adenylate kinase family. As to quaternary structure, monomer.

It is found in the cytoplasm. It carries out the reaction AMP + ATP = 2 ADP. It functions in the pathway purine metabolism; AMP biosynthesis via salvage pathway; AMP from ADP: step 1/1. Catalyzes the reversible transfer of the terminal phosphate group between ATP and AMP. Plays an important role in cellular energy homeostasis and in adenine nucleotide metabolism. In Treponema pallidum (strain Nichols), this protein is Adenylate kinase.